Reading from the N-terminus, the 250-residue chain is MNDTRTSRSARFDTTPVVVEDLGLIDYHAAWELQRTIAAERAEGAGSDRLLLLEHPSVYTAGRRTEDADLPIDGSPVVQVDRGGKITWHGPGQLVGYPIVRLAEPVDVVDYVRRLEEALISVCTELGLTVGRVEGRSGVWLPATETLAERKIAAIGIRVQRGVALHGISFNCNSALDGFQAIVPCGIQDAGVTTLTRELGREVTVAEVKPMVATAVVQALNGDLPVRDHDLPRPGTTPAAPNSTRVRSMT.

The 181-residue stretch at 44–224 folds into the BPL/LPL catalytic domain; that stretch reads GAGSDRLLLL…AVVQALNGDL (181 aa). Residues 82–89, 154–156, and 167–169 contribute to the substrate site; these read RGGKITWH, AIG, and GIS. The active-site Acyl-thioester intermediate is Cys185. Residues 224 to 250 are disordered; the sequence is LPVRDHDLPRPGTTPAAPNSTRVRSMT. Residues 239–250 show a composition bias toward polar residues; that stretch reads AAPNSTRVRSMT.

The protein belongs to the LipB family.

The protein localises to the cytoplasm. The enzyme catalyses octanoyl-[ACP] + L-lysyl-[protein] = N(6)-octanoyl-L-lysyl-[protein] + holo-[ACP] + H(+). Its pathway is protein modification; protein lipoylation via endogenous pathway; protein N(6)-(lipoyl)lysine from octanoyl-[acyl-carrier-protein]: step 1/2. In terms of biological role, catalyzes the transfer of endogenously produced octanoic acid from octanoyl-acyl-carrier-protein onto the lipoyl domains of lipoate-dependent enzymes. Lipoyl-ACP can also act as a substrate although octanoyl-ACP is likely to be the physiological substrate. The chain is Octanoyltransferase from Nocardia farcinica (strain IFM 10152).